The sequence spans 119 residues: Protein yippee-like 1 (119 aa).

The region spanning 19–116 (RTYSCIHCRA…IELAHMIKDN (98 aa)) is the Yippee domain. Residues C23, C26, C79, and C82 each coordinate Zn(2+). A Nuclear localization signal motif is present at residues 99–104 (KYKEGK).

This sequence belongs to the yippee family.

It localises to the nucleus. Its function is as follows. May play a role in epithelioid conversion of fibroblasts. This is Protein yippee-like 1 (YPEL1) from Chlorocebus aethiops (Green monkey).